Reading from the N-terminus, the 186-residue chain is Ribosome-recycling factor (186 aa).

The protein belongs to the RRF family.

Its subcellular location is the cytoplasm. In terms of biological role, responsible for the release of ribosomes from messenger RNA at the termination of protein biosynthesis. May increase the efficiency of translation by recycling ribosomes from one round of translation to another. This is Ribosome-recycling factor from Brucella melitensis biotype 2 (strain ATCC 23457).